A 292-amino-acid chain; its full sequence is MAIQMTTKTTYQWPQSKDIYPYRPGRFDAPKHWRYNLRSFLNRGSIRRFEQFINQHPFLIDIFNTHLDYSYPVACRFLDKRFNASQRFHAVCENLLFLPEKLTALSTPLWEKPLSFGEVIPDFEMTLSMTTHQPMEGYWVLELWHKPRNELVYLLTFAKLGDALLIAVVQGPNFEGSKEMVKQLTKLCHGLRPAYLMVETMKSLTKILGYNKLLGIPQKYQNKSRFIQSKQYTVDYDAIFGESGGELKDYWELPLEMDRNLDDIPSKKRSMYRKRYAMLDDLAKVIEEKLGL.

This is an uncharacterized protein from Haemophilus influenzae (strain ATCC 51907 / DSM 11121 / KW20 / Rd).